We begin with the raw amino-acid sequence, 423 residues long: MSDIISAVDAMEVLDSRGNPTVRVFVTLDNGTTCAASVPSGASTGENEAIELRDGDASRYLGKGVLKAVDNVKNIIAPAVIGKKITHQAAIDNLMIELDGTETKSSLGANAILGVSMAVARAGARSSRLPLYQYLGGPGARRIPVPAMNIINGGEHADNSVDIQEFMAVPVGAPSFGEGLRYIAETFHNLKKILKSRGLATSVGDEGGFAPNLESNEAAMDIIIEAIEASGYTPGKDIAFALDSAASSFSPDLCGSYDLKWSGGGKKDSADMIAMAQKWIEKYPIVSWEDPLAENDWAGFQKLTAAVGDKIDVVGDDLFVTNTKYIARGIEEKSANSVLIKLNQIGTVTESIDAVRMCREAGWRYFISHRSGETEDTFLADFAVAMDGGQLKTGSASRSERIAKYNRLLEIERELGANALYYW.

Gln-164 contacts (2R)-2-phosphoglycerate. The Proton donor role is filled by Glu-206. Positions 243, 289, and 316 each coordinate Mg(2+). The (2R)-2-phosphoglycerate site is built by Lys-341, Arg-370, Ser-371, and Lys-392. Catalysis depends on Lys-341, which acts as the Proton acceptor.

The protein belongs to the enolase family. The cofactor is Mg(2+).

The protein localises to the cytoplasm. The protein resides in the secreted. It localises to the cell surface. The enzyme catalyses (2R)-2-phosphoglycerate = phosphoenolpyruvate + H2O. It functions in the pathway carbohydrate degradation; glycolysis; pyruvate from D-glyceraldehyde 3-phosphate: step 4/5. Functionally, catalyzes the reversible conversion of 2-phosphoglycerate (2-PG) into phosphoenolpyruvate (PEP). It is essential for the degradation of carbohydrates via glycolysis. The chain is Enolase from Desulfotalea psychrophila (strain LSv54 / DSM 12343).